Reading from the N-terminus, the 167-residue chain is Epithelial membrane protein 2 (167 aa).

A helical membrane pass occupies residues 1 to 21 (MLVLLAFIIAFHITSAALLFI). 3 N-linked (GlcNAc...) asparagine glycosylation sites follow: N44, N47, and N52. A run of 3 helical transmembrane segments spans residues 67–87 (TMIL…LQLF), 95–115 (FVLT…AASI), and 143–163 (YILA…YLIL).

It belongs to the PMP-22/EMP/MP20 family. Interacts with PTK2; regulates PTK2 activation and localization. Interacts with ITGB3; regulates the levels of the heterodimer ITGA5-ITGB3 integrin surface expression. Interacts with P2RX7 (via C-terminus). Interacts with ITGB1; the interaction may be direct or indirect and ITGB1 has a heterodimer form.

It is found in the golgi apparatus membrane. It localises to the cell membrane. The protein localises to the apical cell membrane. Its subcellular location is the membrane raft. The protein resides in the cytoplasm. It is found in the nucleus. It localises to the perinuclear region. Functionally, functions as a key regulator of cell membrane composition by regulating protein surface expression. Also, plays a role in regulation of processes including cell migration, cell proliferation, cell contraction and cell adhesion. Regulates transepithelial migration of neutrophils into the alveolar lumen, potentially via mediation of cell surface expression of adhesion markers and lipid raft formation. Negatively regulates caveolae formation by reducing CAV1 expression and CAV1 amount by increasing lysosomal degradation. Facilitates surface trafficking and the formation of lipid rafts bearing GPI-anchor proteins. Regulates surface expression of MHC1 and ICAM1 proteins increasing susceptibility to T-cell mediated cytotoxicity. Regulates the plasma membrane expression of the integrin heterodimers ITGA6-ITGB1, ITGA5-ITGB3 and ITGA5-ITGB1 resulting in modulation of cell-matrix adhesion. Also regulates many processes through PTK2. Regulates blood vessel endothelial cell migration and angiogenesis by regulating VEGF protein expression through PTK2 activation. Regulates cell migration and cell contraction through PTK2 and SRC activation. Regulates focal adhesion density, F-actin conformation and cell adhesion capacity through interaction with PTK2. Positively regulates cell proliferation. Plays a role during cell death and cell blebbing. Promotes angiogenesis and vasculogenesis through induction of VEGFA via a HIF1A-dependent pathway. Also plays a role in embryo implantation by regulating surface trafficking of integrin heterodimer ITGA5-ITGB3. Plays a role in placental angiogenesis and uterine natural killer cell regulation at the maternal-fetal placental interface, however not required in the maternal tissues for a viable pregnancy. Involved in the early stages of embryogenic development and cardiogenesis, potentially via regulation of epithelial-mesenchymal transition timing. May play a role in glomerular filtration. The chain is Epithelial membrane protein 2 (EMP2) from Pan troglodytes (Chimpanzee).